The sequence spans 245 residues: Protein crossbronx (245 aa).

The region spanning 20 to 177 (HQEYKILAEY…VQESIAESKA (158 aa)) is the UBC core domain.

It belongs to the ubiquitin-conjugating enzyme family. FTS subfamily.

This is Protein crossbronx (cbx) from Drosophila mojavensis (Fruit fly).